Reading from the N-terminus, the 370-residue chain is Aminomethyltransferase (370 aa).

The protein belongs to the GcvT family. In terms of assembly, the glycine cleavage system is composed of four proteins: P, T, L and H.

It catalyses the reaction N(6)-[(R)-S(8)-aminomethyldihydrolipoyl]-L-lysyl-[protein] + (6S)-5,6,7,8-tetrahydrofolate = N(6)-[(R)-dihydrolipoyl]-L-lysyl-[protein] + (6R)-5,10-methylene-5,6,7,8-tetrahydrofolate + NH4(+). Functionally, the glycine cleavage system catalyzes the degradation of glycine. The protein is Aminomethyltransferase of Leptospira biflexa serovar Patoc (strain Patoc 1 / Ames).